The sequence spans 236 residues: MAKRYWNINLEEMMEAGVHFGHGTRKWNPRMAPYISAKRKGIHITNLTRTARFLSEACDLVFDAASRGKQFLIVGTKNKAADSVARAAIRARCHYVNKKWLGGMLTNWSTTETRLHKFRDLRTEQKTGRLNRLPKRDAAVLKRQLSHLQTYLGGIKYMTGLPDIVIIIDQQEEYTALRECITLGIPTISLIDTNCDPDLADISIPANDDAIASIRLILNKLVFAICEGHSSYIQNS.

It belongs to the universal ribosomal protein uS2 family.

The protein resides in the plastid. The protein localises to the chloroplast. The polypeptide is Small ribosomal subunit protein uS2c (rps2) (Carica papaya (Papaya)).